Reading from the N-terminus, the 219-residue chain is Ribose-5-phosphate isomerase A (219 aa).

Residues 28 to 31 (SGST), 81 to 84 (DGAD), and 94 to 97 (KGGG) each bind substrate. Glu-103 acts as the Proton acceptor in catalysis. Lys-121 is a binding site for substrate.

Belongs to the ribose 5-phosphate isomerase family. In terms of assembly, homodimer.

The catalysed reaction is aldehydo-D-ribose 5-phosphate = D-ribulose 5-phosphate. The protein operates within carbohydrate degradation; pentose phosphate pathway; D-ribose 5-phosphate from D-ribulose 5-phosphate (non-oxidative stage): step 1/1. Its function is as follows. Catalyzes the reversible conversion of ribose-5-phosphate to ribulose 5-phosphate. This chain is Ribose-5-phosphate isomerase A, found in Actinobacillus succinogenes (strain ATCC 55618 / DSM 22257 / CCUG 43843 / 130Z).